The following is a 385-amino-acid chain: Histidinol-phosphate aminotransferase (385 aa).

An N6-(pyridoxal phosphate)lysine modification is found at Lys235.

It belongs to the class-II pyridoxal-phosphate-dependent aminotransferase family. Histidinol-phosphate aminotransferase subfamily. Homodimer. Pyridoxal 5'-phosphate serves as cofactor.

It carries out the reaction L-histidinol phosphate + 2-oxoglutarate = 3-(imidazol-4-yl)-2-oxopropyl phosphate + L-glutamate. It functions in the pathway amino-acid biosynthesis; L-histidine biosynthesis; L-histidine from 5-phospho-alpha-D-ribose 1-diphosphate: step 7/9. This chain is Histidinol-phosphate aminotransferase, found in Nocardia farcinica (strain IFM 10152).